Consider the following 1464-residue polypeptide: ABC transporter G family member 35 (1464 aa).

The tract at residues 1 to 26 is disordered; that stretch reads MDAAAEMQKVVSLRRGGGGSSSRGAA. Positions 173 to 446 constitute an ABC transporter 1 domain; that stretch reads ANALGILPNK…FELMGFKCPE (274 aa). 206 to 213 serves as a coordination point for ATP; the sequence is GPPGSGKT. The region spanning 524–737 is the ABC transmembrane type-2 1 domain; it reads ELLKANIDRE…AQNAISVNEF (214 aa). 7 helical membrane-spanning segments follow: residues 542 to 562, 575 to 595, 630 to 650, 662 to 682, 686 to 706, 715 to 735, and 774 to 794; these read FVYI…MTVF, GVIF…NGLS, IPMS…VIGF, LLML…GGAA, IVAN…GGFI, WWIW…ISVN, and IGFG…TLAL. Residues 867–1119 form the ABC transporter 2 domain; it reads LTFDNIKYSV…ELIKYFEGIK (253 aa). Residue 912 to 919 coordinates ATP; the sequence is GVSGAGKT. Positions 1192–1406 constitute an ABC transmembrane type-2 2 domain; it reads NQCLACLWKM…TLYGLVASQF (215 aa). 7 helical membrane passes run 1213–1233, 1243–1263, 1299–1319, 1326–1346, 1356–1376, 1387–1407, and 1436–1456; these read AIRL…FWDL, LFNA…LNSQ, FPYT…MIGF, FFWY…YGMM, VASI…GFII, WYCW…SQFG, and VVAV…GFAI.

The protein belongs to the ABC transporter superfamily. ABCG family. PDR (TC 3.A.1.205) subfamily.

Its subcellular location is the membrane. In terms of biological role, may be a general defense protein. In Oryza sativa subsp. japonica (Rice), this protein is ABC transporter G family member 35.